A 91-amino-acid chain; its full sequence is Small ribosomal subunit protein uS19 (91 aa).

Belongs to the universal ribosomal protein uS19 family.

Its function is as follows. Protein S19 forms a complex with S13 that binds strongly to the 16S ribosomal RNA. This Bordetella bronchiseptica (strain ATCC BAA-588 / NCTC 13252 / RB50) (Alcaligenes bronchisepticus) protein is Small ribosomal subunit protein uS19.